A 134-amino-acid polypeptide reads, in one-letter code: Putative pre-16S rRNA nuclease (134 aa).

Belongs to the YqgF nuclease family.

It localises to the cytoplasm. Could be a nuclease involved in processing of the 5'-end of pre-16S rRNA. This is Putative pre-16S rRNA nuclease from Helicobacter pylori (strain G27).